The sequence spans 968 residues: Glycine dehydrogenase (decarboxylating) (968 aa).

An N6-(pyridoxal phosphate)lysine modification is found at Lys712.

The protein belongs to the GcvP family. As to quaternary structure, the glycine cleavage system is composed of four proteins: P, T, L and H. Requires pyridoxal 5'-phosphate as cofactor.

It carries out the reaction N(6)-[(R)-lipoyl]-L-lysyl-[glycine-cleavage complex H protein] + glycine + H(+) = N(6)-[(R)-S(8)-aminomethyldihydrolipoyl]-L-lysyl-[glycine-cleavage complex H protein] + CO2. Functionally, the glycine cleavage system catalyzes the degradation of glycine. The P protein binds the alpha-amino group of glycine through its pyridoxal phosphate cofactor; CO(2) is released and the remaining methylamine moiety is then transferred to the lipoamide cofactor of the H protein. This Prochlorococcus marinus (strain NATL2A) protein is Glycine dehydrogenase (decarboxylating).